We begin with the raw amino-acid sequence, 86 residues long: Cytochrome c oxidase subunit 6B1 (86 aa).

Alanine 2 is subject to N-acetylalanine. The CHCH domain occupies 27–73 (TRNCWQNYLDFHRCQKAMTAKGGDISVCEWYQRVYQSLCPTSWVTDW). Residues 30-40 (CWQNYLDFHRC) carry the Cx9C motif motif. Cystine bridges form between cysteine 30/cysteine 65 and cysteine 40/cysteine 54. The Cx10C motif motif lies at 54 to 65 (CEWYQRVYQSLC).

Belongs to the cytochrome c oxidase subunit 6B family. In terms of assembly, component of the cytochrome c oxidase (complex IV, CIV), a multisubunit enzyme composed of 14 subunits. The complex is composed of a catalytic core of 3 subunits MT-CO1, MT-CO2 and MT-CO3, encoded in the mitochondrial DNA, and 11 supernumerary subunits COX4I, COX5A, COX5B, COX6A, COX6B, COX6C, COX7A, COX7B, COX7C, COX8 and NDUFA4, which are encoded in the nuclear genome. The complex exists as a monomer or a dimer and forms supercomplexes (SCs) in the inner mitochondrial membrane with NADH-ubiquinone oxidoreductase (complex I, CI) and ubiquinol-cytochrome c oxidoreductase (cytochrome b-c1 complex, complex III, CIII), resulting in different assemblies (supercomplex SCI(1)III(2)IV(1) and megacomplex MCI(2)III(2)IV(2)).

The protein localises to the mitochondrion inner membrane. Its pathway is energy metabolism; oxidative phosphorylation. Functionally, component of the cytochrome c oxidase, the last enzyme in the mitochondrial electron transport chain which drives oxidative phosphorylation. The respiratory chain contains 3 multisubunit complexes succinate dehydrogenase (complex II, CII), ubiquinol-cytochrome c oxidoreductase (cytochrome b-c1 complex, complex III, CIII) and cytochrome c oxidase (complex IV, CIV), that cooperate to transfer electrons derived from NADH and succinate to molecular oxygen, creating an electrochemical gradient over the inner membrane that drives transmembrane transport and the ATP synthase. Cytochrome c oxidase is the component of the respiratory chain that catalyzes the reduction of oxygen to water. Electrons originating from reduced cytochrome c in the intermembrane space (IMS) are transferred via the dinuclear copper A center (CU(A)) of subunit 2 and heme A of subunit 1 to the active site in subunit 1, a binuclear center (BNC) formed by heme A3 and copper B (CU(B)). The BNC reduces molecular oxygen to 2 water molecules using 4 electrons from cytochrome c in the IMS and 4 protons from the mitochondrial matrix. The chain is Cytochrome c oxidase subunit 6B1 (COX6B1) from Pongo abelii (Sumatran orangutan).